Consider the following 156-residue polypeptide: Small ribosomal subunit protein uS7 (156 aa).

Belongs to the universal ribosomal protein uS7 family. In terms of assembly, part of the 30S ribosomal subunit. Contacts proteins S9 and S11.

One of the primary rRNA binding proteins, it binds directly to 16S rRNA where it nucleates assembly of the head domain of the 30S subunit. Is located at the subunit interface close to the decoding center, probably blocks exit of the E-site tRNA. This Rubrobacter xylanophilus (strain DSM 9941 / JCM 11954 / NBRC 16129 / PRD-1) protein is Small ribosomal subunit protein uS7.